The chain runs to 178 residues: ATP synthase subunit delta (178 aa).

It belongs to the ATPase delta chain family. F-type ATPases have 2 components, F(1) - the catalytic core - and F(0) - the membrane proton channel. F(1) has five subunits: alpha(3), beta(3), gamma(1), delta(1), epsilon(1). F(0) has three main subunits: a(1), b(2) and c(10-14). The alpha and beta chains form an alternating ring which encloses part of the gamma chain. F(1) is attached to F(0) by a central stalk formed by the gamma and epsilon chains, while a peripheral stalk is formed by the delta and b chains.

It localises to the cell inner membrane. In terms of biological role, f(1)F(0) ATP synthase produces ATP from ADP in the presence of a proton or sodium gradient. F-type ATPases consist of two structural domains, F(1) containing the extramembraneous catalytic core and F(0) containing the membrane proton channel, linked together by a central stalk and a peripheral stalk. During catalysis, ATP synthesis in the catalytic domain of F(1) is coupled via a rotary mechanism of the central stalk subunits to proton translocation. Functionally, this protein is part of the stalk that links CF(0) to CF(1). It either transmits conformational changes from CF(0) to CF(1) or is implicated in proton conduction. This is ATP synthase subunit delta from Laribacter hongkongensis (strain HLHK9).